The chain runs to 847 residues: Ras GTPase-activating protein 2 (847 aa).

Low complexity predominate over residues 1–21 (MAAAAPAAAASPEAPAVSGSA). The disordered stretch occupies residues 1–31 (MAAAAPAAAASPEAPAVSGSADPETGDEDSR). The residue at position 2 (Ala2) is an N-acetylalanine. 2 C2 domains span residues 19 to 137 (GSAD…ETWF) and 148 to 288 (VQGK…QAWY). In terms of domain architecture, Ras-GAP spans 371-588 (NKLVPFITAV…TDVKKFLDEI (218 aa)). Ser554 is subject to Phosphoserine. Residues 603-704 (VHLKEGEMYK…WIDVLCRVSR (102 aa)) enclose the PH domain. The Btk-type zinc finger occupies 706–742 (NHNRLSSFHPSAYLNGNWLCCQETSESTPGCKPCTAG). Residues His714, Cys725, Cys726, and Cys736 each coordinate Zn(2+). Residues 819 to 847 (DEPHEKYRKKRSSSAKYGSKENPIVGKIS) are disordered.

The protein localises to the cell membrane. Its function is as follows. Inhibitory regulator of the Ras-cyclic AMP pathway. Binds inositol tetrakisphosphate (IP4) and phospholipids. This chain is Ras GTPase-activating protein 2 (Rasa2), found in Mus musculus (Mouse).